Reading from the N-terminus, the 164-residue chain is Large ribosomal subunit protein uL15 (164 aa).

Residues 1–33 (MTSKKRRQRGSRTHGGGTHKNRRGAGHRGGRGR) show a composition bias toward basic residues. Disordered regions lie at residues 1–59 (MTSK…PGAE) and 137–164 (AGGS…NDEN). Over residues 34 to 43 (AGRDKHEQHN) the composition is skewed to basic and acidic residues. Acidic residues predominate over residues 153–164 (GEDEEPNSNDEN).

It belongs to the universal ribosomal protein uL15 family. As to quaternary structure, part of the 50S ribosomal subunit.

In terms of biological role, binds to the 23S rRNA. The chain is Large ribosomal subunit protein uL15 from Haloquadratum walsbyi (strain DSM 16790 / HBSQ001).